Here is an 88-residue protein sequence, read N- to C-terminus: Selenoprotein W (88 aa).

The cysteinyl-selenocysteine (Cys-Sec); redox-active cross-link spans 10 to 13 (CGAU). Residue Sec-13 is a non-standard amino acid, selenocysteine. Cys-37 carries the post-translational modification S-glutathionyl cysteine.

This sequence belongs to the SelWTH family. Selenoprotein W subfamily. Interacts with DPYSL2, PRDX1, YWHAB, YWHAG, HSP70 and HSP90. In the embryo, expressed in the developing nervous system and in mesoderm-derived tissues such as heart and limbs. In the adult, predominantly expressed in brain, skeletal muscle and heart.

Its subcellular location is the cytoplasm. Functionally, plays a role as a glutathione (GSH)-dependent antioxidant. May be involved in a redox-related process. May play a role in the myopathies of selenium deficiency. The polypeptide is Selenoprotein W (Mus musculus (Mouse)).